The sequence spans 87 residues: Acyl-CoA-binding protein (87 aa).

Ser2 carries the N-acetylserine modification. Residues 2 to 87 (SQAEFDKAAE…VEDLKKKYGI (86 aa)) form the ACB domain. The residue at position 8 (Lys8) is an N6-acetyllysine; alternate. Lys8 is modified (N6-succinyllysine; alternate). Lys14 contacts an acyl-CoA. At Lys17 the chain carries N6-succinyllysine. Lys19 bears the N6-acetyllysine mark. Tyr29 carries the phosphotyrosine modification. An acyl-CoA-binding positions include 29 to 33 (YSHYK), Lys55, and Tyr74. The residue at position 55 (Lys55) is an N6-acetyllysine; alternate. Lys55 bears the N6-succinyllysine; alternate mark. Lys55 is modified (N6-(2-hydroxyisobutyryl)lysine; alternate). The residue at position 55 (Lys55) is an N6-malonyllysine; alternate. Residue Lys77 is modified to N6-acetyllysine; alternate. Lys77 is modified (N6-succinyllysine; alternate).

It belongs to the ACBP family. In terms of assembly, monomer.

The protein resides in the endoplasmic reticulum. It is found in the golgi apparatus. In terms of biological role, binds medium- and long-chain acyl-CoA esters with very high affinity and may function as an intracellular carrier of acyl-CoA esters. This chain is Acyl-CoA-binding protein (DBI), found in Canis lupus familiaris (Dog).